The primary structure comprises 387 residues: Putative glutamate--cysteine ligase 2 (387 aa).

The protein belongs to the glutamate--cysteine ligase type 2 family. YbdK subfamily.

It carries out the reaction L-cysteine + L-glutamate + ATP = gamma-L-glutamyl-L-cysteine + ADP + phosphate + H(+). In terms of biological role, ATP-dependent carboxylate-amine ligase which exhibits weak glutamate--cysteine ligase activity. The chain is Putative glutamate--cysteine ligase 2 from Pseudomonas fluorescens (strain ATCC BAA-477 / NRRL B-23932 / Pf-5).